The sequence spans 129 residues: Glycine cleavage system H protein (129 aa).

Residues 24–106 (LLKIGVSEFA…IGDGWLVILK (83 aa)) enclose the Lipoyl-binding domain. At lysine 65 the chain carries N6-lipoyllysine.

This sequence belongs to the GcvH family. The glycine cleavage system is composed of four proteins: P, T, L and H. The cofactor is (R)-lipoate.

In terms of biological role, the glycine cleavage system catalyzes the degradation of glycine. The H protein shuttles the methylamine group of glycine from the P protein to the T protein. This is Glycine cleavage system H protein from Prochlorococcus marinus (strain MIT 9301).